A 453-amino-acid polypeptide reads, in one-letter code: GTPase Der (453 aa).

2 consecutive EngA-type G domains span residues 4-169 (PIVA…SETP) and 177-352 (IKVA…RQFE). GTP contacts are provided by residues 10–17 (GRPNVGKS), 57–61 (DTGGL), 120–123 (NKCE), 183–190 (GRPNVGKS), 230–234 (DTAGI), and 295–298 (NKWD). Positions 353–438 (QRVTTSVINE…PIRLLWRGKK (86 aa)) constitute a KH-like domain.

It belongs to the TRAFAC class TrmE-Era-EngA-EngB-Septin-like GTPase superfamily. EngA (Der) GTPase family. As to quaternary structure, associates with the 50S ribosomal subunit.

Its function is as follows. GTPase that plays an essential role in the late steps of ribosome biogenesis. The protein is GTPase Der of Acaryochloris marina (strain MBIC 11017).